Consider the following 845-residue polypeptide: Dynein axonemal assembly factor 5 (845 aa).

HEAT repeat units follow at residues 47-84 (DVFD…SLPP), 138-175 (ECYP…LADT), 180-217 (PFTE…HMDA), 260-297 (SFFE…QYFN), 332-369 (QRSL…HAEA), 523-561 (NFGQ…LDAA), 674-715 (SESV…MSVE), and 766-803 (AIVK…SHPE).

The protein belongs to the DNAAF5 family. Expressed in testis.

It is found in the cytoplasm. It localises to the dynein axonemal particle. Its function is as follows. Cytoplasmic protein involved in the delivery of the dynein machinery to the motile cilium. It is required for the assembly of the axonemal dynein inner and outer arms, two structures attached to the peripheral outer doublet A microtubule of the axoneme, that play a crucial role in cilium motility. This Drosophila melanogaster (Fruit fly) protein is Dynein axonemal assembly factor 5.